Consider the following 301-residue polypeptide: Leucine-rich repeat-containing protein 30 (301 aa).

LRR repeat units follow at residues 72–93 (EVQK…VGKL), 95–116 (RIVV…VSLL), 118–139 (CLKV…LSLC), 141–163 (KLEV…ADLS), 164–185 (RLRK…VFSL), 187–208 (ELIF…IQHL), 210–231 (SLQI…LCLV), 233–254 (SLEL…LHLL), and 265–287 (MDKG…VEGG).

The chain is Leucine-rich repeat-containing protein 30 (LRRC30) from Homo sapiens (Human).